A 168-amino-acid chain; its full sequence is MNINDKIGIYPGTFDPITFGHLDIIKRACKLVDKLIIGVAENVNKHTAFDTKLRTSMAENEIKGLGIDADVISFNGLLVKFAKEQNASVIIRGLRAVSDFDYEFQMSWVNYKLLPEIETIFLPASEDTQFISSSFVKEIARLGEDVSKFVSKGVQNELINLNRIKNGE.

Substrate is bound at residue Thr13. ATP contacts are provided by residues 13-14 (TF) and His21. Residues Lys45, Leu78, and Arg92 each contribute to the substrate site. Residues 93 to 95 (GLR), Glu103, and 128 to 134 (TQFISSS) each bind ATP.

The protein belongs to the bacterial CoaD family. As to quaternary structure, homohexamer. Mg(2+) is required as a cofactor.

It is found in the cytoplasm. It carries out the reaction (R)-4'-phosphopantetheine + ATP + H(+) = 3'-dephospho-CoA + diphosphate. It participates in cofactor biosynthesis; coenzyme A biosynthesis; CoA from (R)-pantothenate: step 4/5. Reversibly transfers an adenylyl group from ATP to 4'-phosphopantetheine, yielding dephospho-CoA (dPCoA) and pyrophosphate. The polypeptide is Phosphopantetheine adenylyltransferase (Wolbachia pipientis wMel).